A 130-amino-acid polypeptide reads, in one-letter code: MSGKGKSAGADKASTSRSAKAGLTFPVGRIHRLLRKGNYAQRVGSGAPVYLTSVLEYLTAEILELAGNAARDNKKSRIIPRHLQLAIRNDEELNKLLGDVTIAQGGVLPNIHQNLLPKKSGKGDKASQEL.

Residues lysine 4 and lysine 6 each carry the N6-acetyllysine modification. N5-methylglutamine is present on glutamine 104. Residue lysine 125 forms a Glycyl lysine isopeptide (Lys-Gly) (interchain with G-Cter in SUMO) linkage. Serine 127 carries the phosphoserine modification. Residues 127 to 128 (SQ) carry the [ST]-Q motif motif.

It belongs to the histone H2A family. The nucleosome is a histone octamer containing two molecules each of H2A, H2B, H3 and H4 assembled in one H3-H4 heterotetramer and two H2A-H2B heterodimers. The octamer wraps approximately 147 bp of DNA. Phosphorylated to form H2AS128ph (gamma-H2A) in response to DNA double-strand breaks (DSBs) generated by exogenous genotoxic agents and by stalled replication forks. Phosphorylation is dependent on the DNA damage checkpoint kinases MEC1/ATR and TEL1/ATM, spreads on either side of a detected DSB site and may mark the surrounding chromatin for recruitment of proteins required for DNA damage signaling and repair. Gamma-H2A is removed from the DNA prior to the strand invasion-primer extension step of the repair process and subsequently dephosphorylated. Dephosphorylation is necessary for efficient recovery from the DNA damage checkpoint. Post-translationally, acetylated by ESA1 to form H2AK4ac and H2AK7ac.

The protein resides in the nucleus. It localises to the chromosome. Its function is as follows. Core component of nucleosome which plays a central role in DNA double strand break (DSB) repair. Nucleosomes wrap and compact DNA into chromatin, limiting DNA accessibility to the cellular machineries which require DNA as a template. Histones thereby play a central role in transcription regulation, DNA repair, DNA replication and chromosomal stability. DNA accessibility is regulated via a complex set of post-translational modifications of histones, also called histone code, and nucleosome remodeling. The protein is Histone H2A.2 (HTA2) of Meyerozyma guilliermondii (strain ATCC 6260 / CBS 566 / DSM 6381 / JCM 1539 / NBRC 10279 / NRRL Y-324) (Yeast).